The primary structure comprises 380 residues: 1-deoxy-D-xylulose 5-phosphate reductoisomerase (380 aa).

Residues Thr-10, Gly-11, Ser-12, Ile-13, Gly-36, Arg-37, Asn-38, and Asn-120 each contribute to the NADPH site. Lys-121 is a binding site for 1-deoxy-D-xylulose 5-phosphate. Glu-122 contributes to the NADPH binding site. Asp-146 is a Mn(2+) binding site. 1-deoxy-D-xylulose 5-phosphate contacts are provided by Ser-147, Glu-148, Ser-172, and His-195. Glu-148 contributes to the Mn(2+) binding site. Residue Gly-201 participates in NADPH binding. Ser-208, Asn-213, Lys-214, and Glu-217 together coordinate 1-deoxy-D-xylulose 5-phosphate. Position 217 (Glu-217) interacts with Mn(2+).

It belongs to the DXR family. Requires Mg(2+) as cofactor. Mn(2+) is required as a cofactor.

The enzyme catalyses 2-C-methyl-D-erythritol 4-phosphate + NADP(+) = 1-deoxy-D-xylulose 5-phosphate + NADPH + H(+). Its pathway is isoprenoid biosynthesis; isopentenyl diphosphate biosynthesis via DXP pathway; isopentenyl diphosphate from 1-deoxy-D-xylulose 5-phosphate: step 1/6. Functionally, catalyzes the NADPH-dependent rearrangement and reduction of 1-deoxy-D-xylulose-5-phosphate (DXP) to 2-C-methyl-D-erythritol 4-phosphate (MEP). In Listeria monocytogenes serovar 1/2a (strain ATCC BAA-679 / EGD-e), this protein is 1-deoxy-D-xylulose 5-phosphate reductoisomerase.